The sequence spans 399 residues: UDP-N-acetylglucosamine--N-acetylmuramyl-(pentapeptide) pyrophosphoryl-undecaprenol N-acetylglucosamine transferase (399 aa).

The interval 1 to 31 (MTSRFGHSQHPRRGRSARARAGRREGVQSNF) is disordered. Residues 7 to 21 (HSQHPRRGRSARARA) are compositionally biased toward basic residues. Residues 58 to 60 (TGG), Asn-170, Arg-206, Ser-234, Ile-288, and Gln-333 contribute to the UDP-N-acetyl-alpha-D-glucosamine site.

It belongs to the glycosyltransferase 28 family. MurG subfamily.

The protein resides in the cell inner membrane. The enzyme catalyses di-trans,octa-cis-undecaprenyl diphospho-N-acetyl-alpha-D-muramoyl-L-alanyl-D-glutamyl-meso-2,6-diaminopimeloyl-D-alanyl-D-alanine + UDP-N-acetyl-alpha-D-glucosamine = di-trans,octa-cis-undecaprenyl diphospho-[N-acetyl-alpha-D-glucosaminyl-(1-&gt;4)]-N-acetyl-alpha-D-muramoyl-L-alanyl-D-glutamyl-meso-2,6-diaminopimeloyl-D-alanyl-D-alanine + UDP + H(+). It participates in cell wall biogenesis; peptidoglycan biosynthesis. Its function is as follows. Cell wall formation. Catalyzes the transfer of a GlcNAc subunit on undecaprenyl-pyrophosphoryl-MurNAc-pentapeptide (lipid intermediate I) to form undecaprenyl-pyrophosphoryl-MurNAc-(pentapeptide)GlcNAc (lipid intermediate II). In Acidovorax sp. (strain JS42), this protein is UDP-N-acetylglucosamine--N-acetylmuramyl-(pentapeptide) pyrophosphoryl-undecaprenol N-acetylglucosamine transferase.